A 208-amino-acid polypeptide reads, in one-letter code: Proteasome subunit beta 2 (208 aa).

Positions 1 to 9 (MSGKKIVSK) are cleaved as a propeptide — removed in mature form; by autocatalysis. Threonine 10 serves as the catalytic Nucleophile.

Belongs to the peptidase T1B family. In terms of assembly, the 20S proteasome core is composed of 14 alpha and 14 beta subunits that assemble into four stacked heptameric rings, resulting in a barrel-shaped structure. The two inner rings, each composed of seven catalytic beta subunits, are sandwiched by two outer rings, each composed of seven alpha subunits. The catalytic chamber with the active sites is on the inside of the barrel. Has a gated structure, the ends of the cylinder being occluded by the N-termini of the alpha-subunits. Is capped at one or both ends by the proteasome regulatory ATPase, PAN.

It is found in the cytoplasm. The enzyme catalyses Cleavage of peptide bonds with very broad specificity.. With respect to regulation, the formation of the proteasomal ATPase PAN-20S proteasome complex, via the docking of the C-termini of PAN into the intersubunit pockets in the alpha-rings, triggers opening of the gate for substrate entry. Interconversion between the open-gate and close-gate conformations leads to a dynamic regulation of the 20S proteasome proteolysis activity. Its function is as follows. Component of the proteasome core, a large protease complex with broad specificity involved in protein degradation. The protein is Proteasome subunit beta 2 of Staphylothermus marinus (strain ATCC 43588 / DSM 3639 / JCM 9404 / F1).